Consider the following 638-residue polypeptide: Phosphomethylpyrimidine synthase (638 aa).

Substrate-binding positions include Asn243, Met272, Tyr301, His337, 357–359 (SRG), 398–401 (DGLR), and Glu437. His441 contributes to the Zn(2+) binding site. Tyr464 is a binding site for substrate. Position 505 (His505) interacts with Zn(2+). Positions 585, 588, and 593 each coordinate [4Fe-4S] cluster.

Belongs to the ThiC family. Homodimer. The cofactor is [4Fe-4S] cluster.

It catalyses the reaction 5-amino-1-(5-phospho-beta-D-ribosyl)imidazole + S-adenosyl-L-methionine = 4-amino-2-methyl-5-(phosphooxymethyl)pyrimidine + CO + 5'-deoxyadenosine + formate + L-methionine + 3 H(+). It participates in cofactor biosynthesis; thiamine diphosphate biosynthesis. Catalyzes the synthesis of the hydroxymethylpyrimidine phosphate (HMP-P) moiety of thiamine from aminoimidazole ribotide (AIR) in a radical S-adenosyl-L-methionine (SAM)-dependent reaction. This is Phosphomethylpyrimidine synthase from Aromatoleum aromaticum (strain DSM 19018 / LMG 30748 / EbN1) (Azoarcus sp. (strain EbN1)).